The chain runs to 371 residues: 4-hydroxybenzoate polyprenyltransferase, mitochondrial (371 aa).

A mitochondrion-targeting transit peptide spans 1-45 (MLGSCGAGLVRGLRAETQAWLWGTRGRSLALVHAARGLHAANWQP). The Mitochondrial matrix portion of the chain corresponds to 46-83 (SPGQGPRGRPLSLSAAAVVNSAPRPLQPYLRLMRLDKP). Residues 84–104 (IGTWLLYLPCTWSIGLAADPG) traverse the membrane as a helical segment. Topologically, residues 105–108 (CLPD) are mitochondrial intermembrane. The chain crosses the membrane as a helical span at residues 109-129 (WYMLSLFGTGAVLMRGAGCTI). At 130–171 (NDMWDRDYDKKVTRTASRPIAAGDISTFRSFVFLGGQLTLAL) the chain is on the mitochondrial matrix side. The helical transmembrane segment at 172–192 (GVLLCLNYYSIALGAASLLLV) threads the bilayer. The Mitochondrial intermembrane portion of the chain corresponds to 193–200 (TTYPLMKR). A helical membrane pass occupies residues 201–221 (ITYWPQLALGLTFNWGALLGW). At 222 to 231 (SAVKGSCDPS) the chain is on the mitochondrial matrix side. Residues 232–252 (VCLPLYFSGIMWTLIYDTIYA) form a helical membrane-spanning segment. Residues 253–277 (HQDKKDDALIGLKSTALLFREDTKK) lie on the Mitochondrial intermembrane side of the membrane. Residues 278–298 (WLSGFSVAMLGALSLVGVNSG) traverse the membrane as a helical segment. At 299–300 (QT) the chain is on the mitochondrial matrix side. The helical transmembrane segment at 301-321 (MPYYTALAAVGAHLAHQIYTL) threads the bilayer. The Mitochondrial intermembrane segment spans residues 322–332 (DINRPEDCWEK). The helical transmembrane segment at 333–353 (FTSNRTIGLIIFLGIVLGNLC) threads the bilayer. The Mitochondrial matrix segment spans residues 354–371 (KAKETDKTRKNIENRMEN).

Belongs to the UbiA prenyltransferase family. Mg(2+) serves as cofactor.

The protein localises to the mitochondrion inner membrane. The enzyme catalyses an all-trans-polyprenyl diphosphate + 4-hydroxybenzoate = a 4-hydroxy-3-(all-trans-polyprenyl)benzoate + diphosphate. It carries out the reaction all-trans-decaprenyl diphosphate + 4-hydroxybenzoate = 4-hydroxy-3-(all-trans-decaprenyl)benzoate + diphosphate. The catalysed reaction is all-trans-nonaprenyl diphosphate + 4-hydroxybenzoate = 4-hydroxy-3-(all-trans-nonaprenyl)benzoate + diphosphate. The protein operates within cofactor biosynthesis; ubiquinone biosynthesis. Mediates the second step in the final reaction sequence of coenzyme Q (CoQ) biosynthesis. Catalyzes the prenylation of para-hydroxybenzoate (PHB) with an all-trans polyprenyl donor (such as all-trans-decaprenyl diphosphate). The length of the polyprenyl side chain varies depending on the species, in humans, the side chain is comprised of 10 isoprenyls (decaprenyl) producing CoQ10 (also known as ubiquinone), whereas rodents predominantly generate CoQ9. However, this specificity is not complete, human tissues have low amounts of CoQ9 and rodent organs contain some CoQ10. Plays a central role in the biosynthesis of CoQ10. CoQ10 is a vital molecule that transports electrons from mitochondrial respiratory chain complexes. CoQs also function as cofactors for uncoupling protein and play a role as regulators of the extracellularly-induced ceramide-dependent apoptotic pathway. Regulates mitochondrial permeability transition pore (mPTP) opening and ROS production (pivotal events in cell death) in a tissue specific manner. The protein is 4-hydroxybenzoate polyprenyltransferase, mitochondrial of Bos taurus (Bovine).